The sequence spans 132 residues: MKKTGILNSHLAKLADDLGHTDRVCIGDLGLPVPNGIPKIDLSLTSGIPSFQEVLDIYLENILVEKVILAEEIKEANPDQLSRLLAKLDNSVSIEYVSHNHLKQMTQDVKAVIRTGENTPYSNIILQSGVII.

The Proton donor role is filled by His20. Substrate is bound by residues Asp28, His99, and 121 to 123; that span reads YSN.

This sequence belongs to the RbsD / FucU family. RbsD subfamily. Homodecamer.

It is found in the cytoplasm. It carries out the reaction beta-D-ribopyranose = beta-D-ribofuranose. It participates in carbohydrate metabolism; D-ribose degradation; D-ribose 5-phosphate from beta-D-ribopyranose: step 1/2. Functionally, catalyzes the interconversion of beta-pyran and beta-furan forms of D-ribose. The sequence is that of D-ribose pyranase from Streptococcus agalactiae serotype V (strain ATCC BAA-611 / 2603 V/R).